The primary structure comprises 252 residues: 3-dehydroquinate dehydratase (252 aa).

Residues Glu-46 to Arg-48 and Arg-82 contribute to the 3-dehydroquinate site. The active-site Proton donor/acceptor is His-143. Residue Lys-170 is the Schiff-base intermediate with substrate of the active site. The 3-dehydroquinate site is built by Arg-212, Ser-231, and Gln-235.

This sequence belongs to the type-I 3-dehydroquinase family. As to quaternary structure, homodimer.

It carries out the reaction 3-dehydroquinate = 3-dehydroshikimate + H2O. It participates in metabolic intermediate biosynthesis; chorismate biosynthesis; chorismate from D-erythrose 4-phosphate and phosphoenolpyruvate: step 3/7. Functionally, involved in the third step of the chorismate pathway, which leads to the biosynthesis of aromatic amino acids. Catalyzes the cis-dehydration of 3-dehydroquinate (DHQ) and introduces the first double bond of the aromatic ring to yield 3-dehydroshikimate. The sequence is that of 3-dehydroquinate dehydratase from Listeria monocytogenes serotype 4b (strain F2365).